The following is a 1506-amino-acid chain: MSTIPLRHSRRQWLPLFLLYLVSTLIILPAATLAADAGVKVSRFAHLPSKVSYFDDSSVVLYHDATAGVVYRSEDEGKTWSPVSGSSSGKAAMLVPHPYDKKQAFILSRELTHWRSTDRGKTWQEFLTPEPPATRAGPPMEFHADEKHWDWIIFTGKKCSMWTPWGGRICHDEAYYTTNAFATNPPRLLEFVMHCNWAKATPEMQTSTDALERIFCIAWEDAQEQRRSMVAGGTGGSTRLFQSDDFFKSRKMVELDMGRNARQFAGLGPSKRFLVTALRDSQGSSSKAGTEMALFVTKDGVKWEKAKFPHGSELRENAYTVVDSTSHSIMIDVVDSVYDNTGVLFTSDSTGTQFVESLRGTRRTPQGLVDFEHLVKIDGVGIANVQSEAEGGVRSMITFDDGSSWHTLKPPAEDDKGKRIDCDPSDAENCALHLWSVSGKTNVGKLFSSVAPGFVMGVGTIGKGLKNYDECDTFLSIDAGRTWKMVSRDAHKYEFGDQGSVLVMVDDEDVTDHVSYSTNFGKTWNKLSLGVTMRAKVLTTIPDSTSLKFLLVGSQTRKQAGGKDRNVVIFLDFAEMKKSKCRESDMEKWYVQAAAEGSCLMGHKQWYKRRKPDADCFIQDKFHDPEDKEDPCPCTDADYECDFGFVRDKQGECVATGNEHIPEGACAKPSDTYLGSSGYRKVPGNTCDAGKGIRKDEKTQKSCSGKNMPQKGSVLHKSFTFPSLVVDKMYFPESSSVLVQLADGTVFQSLNDGYSWKQLNGDGAPSSAEDRFLTMALHAYDPKRGYLITAGQRVYYTTNQGASWSWFSVPLPANGLGINILDFHPDRSDWLIWTGSRDCTFSTAKQCHAEAWYSVSNGAKWEKIDSYVRTCSWARDKKLKMDARAIFCESYQDKKGNQREFTAANRLELIRGDEFYRKRTRVFDAVVGFAVFEQYLVVAEYVTTSSAPGLQLHVSLNGRDFAPIHFPPGMQLGTRAYTVLDSVTDAIFLHFTTHSEAGSEWGTLLKSNSNGTFYTQSLDFVNRNDKGFVDFEKMMGLDGVAIVNVVSNPDDASVSRQKDLVTRITHNDGGRWKSLVPPSRDVYGQPYECNKVGCDLHLHGFTERDDPRDTYSSPSAVGLMMGVGNVGRKLAPYRDSDTFLTRDGGFSWEEVHKDAHKWEFGDQGSIIVLVNDEQATDSVLYSLNEGVTWESYTFGERMRISQIVTVPEDTHRRFILVGTPSGSATKSVAIYLDFSALESRKCVLNVAKPEADDFELWSPSEERAEQCLFGRQTYYYRRKRRADCYVGEKIVQPHSVSRNCSCTEADFECEFNHYRDAKGTCVLYPGVSPLSTDAASQCWAADSDGYWYERTNVRKIPYSWCTQGSRPDRGTRHVCSNNLRAHGFLWWFFVIGCAFGLAGLVGYWWAKKQSSRPGYGSSGRIRLPDASNRLYGRDSELVQNLASVPRFVLGAASAGFARFREIASDRIPFVRNRLDRSRGAYGGYRHLSTDEDAAMLPDFEEEEFER.

The N-terminal stretch at 1-34 (MSTIPLRHSRRQWLPLFLLYLVSTLIILPAATLA) is a signal peptide. The Lumenal portion of the chain corresponds to 35–1383 (ADAGVKVSRF…VCSNNLRAHG (1349 aa)). BNR repeat units follow at residues 71-82 (YRSEDEGKTWSP), 114-124 (WRSTDRGKTWQ), 396-406 (MITFDDGSSWH), 474-484 (FLSIDAGRTWK), 516-525 (YSTNFGKTWN), and 795-805 (YYTTNQGASWS). Asn1010 is a glycosylation site (N-linked (GlcNAc...) asparagine). One copy of the BNR 7 repeat lies at 1181-1190 (YSLNEGVTWE). Asn1299 carries N-linked (GlcNAc...) asparagine glycosylation. A helical membrane pass occupies residues 1384–1404 (FLWWFFVIGCAFGLAGLVGYW). Residues 1405–1506 (WAKKQSSRPG…PDFEEEEFER (102 aa)) are Cytoplasmic-facing.

The protein belongs to the VPS10-related sortilin family.

Its subcellular location is the golgi apparatus. The protein resides in the trans-Golgi network membrane. The protein localises to the prevacuolar compartment membrane. Functionally, functions as a sorting receptor in the Golgi compartment required for the intracellular sorting and delivery of soluble vacuolar proteins, like carboxypeptidase Y (CPY) and proteinase A. Executes multiple rounds of sorting by cycling between the late Golgi and a prevacuolar endosome-like compartment. This Mycosarcoma maydis (Corn smut fungus) protein is Vacuolar protein sorting/targeting protein 10 (VPS10).